The sequence spans 399 residues: Subtilisin-like protease CPC735_033790 (399 aa).

A signal peptide spans 1–20 (MGFLSSAILLLITAFPAAQA). Positions 21–117 (GEMINAAAGA…VEPDRMVNIT (97 aa)) are excised as a propeptide. In terms of domain architecture, Inhibitor I9 spans 37-116 (SYIVVMNEGI…YVEPDRMVNI (80 aa)). A glycan (N-linked (GlcNAc...) asparagine) is linked at Asn-115. The Peptidase S8 domain occupies 127-399 (SYGLGRISNK…NRLLYNNSGV (273 aa)). Catalysis depends on charge relay system residues Asp-159 and His-190. Asn-251 is a glycosylation site (N-linked (GlcNAc...) asparagine). The active-site Charge relay system is the Ser-345. The N-linked (GlcNAc...) asparagine glycan is linked to Asn-395.

Belongs to the peptidase S8 family.

The protein resides in the secreted. Its function is as follows. Secreted subtilisin-like serine protease with keratinolytic activity that contributes to pathogenicity. This is Subtilisin-like protease CPC735_033790 from Coccidioides posadasii (strain C735) (Valley fever fungus).